A 313-amino-acid polypeptide reads, in one-letter code: Ribonuclease HIII (313 aa).

A disordered region spans residues 62–88 (AERWTADAETPAPKKPASKKSIPSVYQ). The region spanning 96 to 312 (MSVIGSDEVG…TQKAKRIASK (217 aa)) is the RNase H type-2 domain. Residues Asp-102, Glu-103, and Asp-207 each coordinate a divalent metal cation.

The protein belongs to the RNase HII family. RnhC subfamily. Requires Mn(2+) as cofactor. Mg(2+) is required as a cofactor.

The protein resides in the cytoplasm. The catalysed reaction is Endonucleolytic cleavage to 5'-phosphomonoester.. Functionally, endonuclease that specifically degrades the RNA of RNA-DNA hybrids. The polypeptide is Ribonuclease HIII (Bacillus licheniformis (strain ATCC 14580 / DSM 13 / JCM 2505 / CCUG 7422 / NBRC 12200 / NCIMB 9375 / NCTC 10341 / NRRL NRS-1264 / Gibson 46)).